A 1508-amino-acid polypeptide reads, in one-letter code: DNA-directed RNA polymerase subunit beta' (1508 aa).

Zn(2+)-binding residues include Cys-71, Cys-73, Cys-86, and Cys-89. Mg(2+)-binding residues include Asp-470, Asp-472, and Asp-474. Residues Cys-804, Cys-878, Cys-885, and Cys-888 each contribute to the Zn(2+) site.

It belongs to the RNA polymerase beta' chain family. The RNAP catalytic core consists of 2 alpha, 1 beta, 1 beta' and 1 omega subunit. When a sigma factor is associated with the core the holoenzyme is formed, which can initiate transcription. Requires Mg(2+) as cofactor. Zn(2+) serves as cofactor.

It catalyses the reaction RNA(n) + a ribonucleoside 5'-triphosphate = RNA(n+1) + diphosphate. In terms of biological role, DNA-dependent RNA polymerase catalyzes the transcription of DNA into RNA using the four ribonucleoside triphosphates as substrates. The protein is DNA-directed RNA polymerase subunit beta' of Campylobacter fetus subsp. fetus (strain 82-40).